Reading from the N-terminus, the 476-residue chain is Aspartyl/glutamyl-tRNA(Asn/Gln) amidotransferase subunit B (476 aa).

This sequence belongs to the GatB/GatE family. GatB subfamily. As to quaternary structure, heterotrimer of A, B and C subunits.

It carries out the reaction L-glutamyl-tRNA(Gln) + L-glutamine + ATP + H2O = L-glutaminyl-tRNA(Gln) + L-glutamate + ADP + phosphate + H(+). The catalysed reaction is L-aspartyl-tRNA(Asn) + L-glutamine + ATP + H2O = L-asparaginyl-tRNA(Asn) + L-glutamate + ADP + phosphate + 2 H(+). Functionally, allows the formation of correctly charged Asn-tRNA(Asn) or Gln-tRNA(Gln) through the transamidation of misacylated Asp-tRNA(Asn) or Glu-tRNA(Gln) in organisms which lack either or both of asparaginyl-tRNA or glutaminyl-tRNA synthetases. The reaction takes place in the presence of glutamine and ATP through an activated phospho-Asp-tRNA(Asn) or phospho-Glu-tRNA(Gln). This Albidiferax ferrireducens (strain ATCC BAA-621 / DSM 15236 / T118) (Rhodoferax ferrireducens) protein is Aspartyl/glutamyl-tRNA(Asn/Gln) amidotransferase subunit B.